A 291-amino-acid chain; its full sequence is Inositol-1-monophosphatase (291 aa).

Positions 83, 104, 106, and 107 each coordinate Mg(2+). Glu83 lines the substrate pocket. Substrate contacts are provided by residues 106–109, Arg206, and Asp235; that span reads IDGT. A Mg(2+)-binding site is contributed by Asp235.

This sequence belongs to the inositol monophosphatase superfamily. Requires Mg(2+) as cofactor.

It carries out the reaction a myo-inositol phosphate + H2O = myo-inositol + phosphate. The chain is Inositol-1-monophosphatase (suhB) from Mycobacterium leprae (strain TN).